The primary structure comprises 408 residues: uncharacterized protein (408 aa).

This is an uncharacterized protein from Methanocaldococcus jannaschii (strain ATCC 43067 / DSM 2661 / JAL-1 / JCM 10045 / NBRC 100440) (Methanococcus jannaschii).